A 480-amino-acid polypeptide reads, in one-letter code: Major facilitator superfamily domain-containing protein 12 (480 aa).

Methionine 1 bears the N-acetylmethionine mark. The Cytoplasmic portion of the chain corresponds to 1–26; that stretch reads MGPGPPAAGAAPSPRPLSLVARLSYA. A helical membrane pass occupies residues 27–47; it reads VGHFLNDLCASMWFTYLLLYL. At 48 to 56 the chain is on the lumenal side; the sequence is HSVRAYSSR. The helical transmembrane segment at 57 to 77 threads the bilayer; it reads GAGLLLLLGQVADGLCTPLVG. Residues 78-97 lie on the Cytoplasmic side of the membrane; it reads YEADRAASCCARYGPRKAWH. Residues 98–118 form a helical membrane-spanning segment; the sequence is LVGTVCVLLSFPFIFSPCLGC. Over 119-124 the chain is Lumenal; that stretch reads GAATPE. A helical transmembrane segment spans residues 125–145; the sequence is WAALLYYGPFIVIFQFGWAST. The Cytoplasmic portion of the chain corresponds to 146–170; sequence QISHLSLIPELVTNDHEKVELTALR. The helical transmembrane segment at 171–191 threads the bilayer; it reads YAFTVVANITVYGAAWLLLHL. Residues 192-218 lie on the Lumenal side of the membrane; sequence QGSSRVEPTQDISISDQLGGQDVPVFR. Residues 219–239 traverse the membrane as a helical segment; it reads NLSLLVVGVGAVFSLLFHLGT. At 240–279 the chain is on the cytoplasmic side; it reads RERRRPHAEEPGEHTPLLAPATAQPLLLWKHWLREPAFYQ. Threonine 254 is subject to Phosphothreonine; by MTOR. A helical membrane pass occupies residues 280-302; sequence VGILYMTTRLIVNLSQTYMAMYL. The Lumenal segment spans residues 303-310; the sequence is TYSLHLPK. A helical membrane pass occupies residues 311 to 331; sequence KFIATIPLVMYLSGFLSSFLM. At 332–347 the chain is on the cytoplasmic side; it reads KPINKCIGRNMTYFSG. 2 consecutive transmembrane segments (helical) span residues 348 to 368 and 369 to 389; these read LLVI…GVAV and YAAA…SLAM. The Cytoplasmic segment spans residues 390–402; sequence TADLIGPHTNSGA. The chain crosses the membrane as a helical span at residues 403 to 423; that stretch reads FVYGSMSFLDKVANGLAVMAI. Over 424–446 the chain is Lumenal; the sequence is QSLHPCPSELCCRACVSFYHWAM. The chain crosses the membrane as a helical span at residues 447–467; it reads VAVTGGVGVAAALCLCSLLLW. The Cytoplasmic segment spans residues 468–480; sequence PTRLRRWDRDARP.

This sequence belongs to the major facilitator superfamily. In terms of processing, phosphorylation at Thr-254 by MTOR via mTORC1 pathway promotes cysteine transport in lysosomes, thereby regulating lysosomal cysteine and cystine storage and redox homeostasis. Widely expressed, with high expression in primary melanocytes.

Its subcellular location is the melanosome membrane. It localises to the lysosome membrane. The enzyme catalyses L-cysteine(in) = L-cysteine(out). In terms of biological role, transporter that mediates the import of cysteine into melanosomes, thereby regulating skin pigmentation. In melanosomes, cysteine import is required both for normal levels of cystine, the oxidized dimer of cysteine, and provide cysteine for the production of the cysteinyldopas used in pheomelanin synthesis, thereby regulating skin pigmentation. Also catalyzes import of cysteine into lysosomes in non-pigmented cells, regulating lysosomal cystine and cysteine storage, which is essnetial for redox homeostasis. The protein is Major facilitator superfamily domain-containing protein 12 of Homo sapiens (Human).